The sequence spans 212 residues: Ion-translocating oxidoreductase complex subunit G (212 aa).

The helical transmembrane segment at 9-29 (ASLLGLFALLCTALVALVNQF) threads the bilayer. An FMN phosphoryl threonine modification is found at Thr176.

This sequence belongs to the RnfG family. As to quaternary structure, the complex is composed of six subunits: RnfA, RnfB, RnfC, RnfD, RnfE and RnfG. FMN is required as a cofactor.

The protein resides in the cell inner membrane. Part of a membrane-bound complex that couples electron transfer with translocation of ions across the membrane. The sequence is that of Ion-translocating oxidoreductase complex subunit G from Shewanella loihica (strain ATCC BAA-1088 / PV-4).